Consider the following 727-residue polypeptide: Elongation factor 2 (727 aa).

Residues 19–260 (DQIRNMGICA…MSIKHLPNPL (242 aa)) enclose the tr-type G domain. GTP is bound by residues 28–35 (AHIDHGKT), 94–98 (DTPGH), and 148–151 (NKVD). A Diphthamide modification is found at H603.

This sequence belongs to the TRAFAC class translation factor GTPase superfamily. Classic translation factor GTPase family. EF-G/EF-2 subfamily.

The protein resides in the cytoplasm. Catalyzes the GTP-dependent ribosomal translocation step during translation elongation. During this step, the ribosome changes from the pre-translocational (PRE) to the post-translocational (POST) state as the newly formed A-site-bound peptidyl-tRNA and P-site-bound deacylated tRNA move to the P and E sites, respectively. Catalyzes the coordinated movement of the two tRNA molecules, the mRNA and conformational changes in the ribosome. The chain is Elongation factor 2 from Methanococcus maripaludis (strain C5 / ATCC BAA-1333).